Consider the following 911-residue polypeptide: DNA mismatch repair protein MutS (911 aa).

Over residues 1–10 the composition is skewed to basic and acidic residues; that stretch reads MDNKTDHKND. The tract at residues 1–24 is disordered; sequence MDNKTDHKNDLNSQPVPSSAPHKE. ATP is bound at residue 662–669; that stretch reads GPNMGGKS.

Belongs to the DNA mismatch repair MutS family.

This protein is involved in the repair of mismatches in DNA. It is possible that it carries out the mismatch recognition step. This protein has a weak ATPase activity. This chain is DNA mismatch repair protein MutS, found in Bartonella quintana (strain Toulouse) (Rochalimaea quintana).